The sequence spans 224 residues: ATP-dependent dethiobiotin synthetase BioD (224 aa).

Asn13–Ile18 serves as a coordination point for ATP. Thr17 lines the Mg(2+) pocket. The active site involves Lys38. Ser42 lines the substrate pocket. ATP is bound by residues Asp55, Glu116–Gly119, Asn176–Asn177, and Asn211. Positions 55 and 116 each coordinate Mg(2+).

The protein belongs to the dethiobiotin synthetase family. In terms of assembly, homodimer. Mg(2+) is required as a cofactor.

Its subcellular location is the cytoplasm. The catalysed reaction is (7R,8S)-7,8-diammoniononanoate + CO2 + ATP = (4R,5S)-dethiobiotin + ADP + phosphate + 3 H(+). It functions in the pathway cofactor biosynthesis; biotin biosynthesis; biotin from 7,8-diaminononanoate: step 1/2. In terms of biological role, catalyzes a mechanistically unusual reaction, the ATP-dependent insertion of CO2 between the N7 and N8 nitrogen atoms of 7,8-diaminopelargonic acid (DAPA, also called 7,8-diammoniononanoate) to form a ureido ring. The sequence is that of ATP-dependent dethiobiotin synthetase BioD from Buchnera aphidicola subsp. Acyrthosiphon pisum (strain APS) (Acyrthosiphon pisum symbiotic bacterium).